Reading from the N-terminus, the 350-residue chain is TATA box-binding protein-like 2 (350 aa).

Residues 82-150 (ENRDQTVTGN…QPSPETPNSN (69 aa)) form a disordered region. A compositionally biased stretch (basic and acidic residues) spans 94–116 (ASEESCRTRDRQSQLQLPDEHGS). Composition is skewed to polar residues over residues 118-128 (LNLNSNSSPDP) and 139-150 (SNQPSPETPNSN).

Belongs to the TBP family. Interacts with TAF3. In terms of tissue distribution, expressed in myotubes and myofibers (at protein level). Expressed in a wide variety of tissues with highest levels in heart, lung, liver, uterus and placenta and especially the gonads. Expression is higher in the ovary than the testis, and within the ovary expression is localized to the oocytes.

The protein localises to the cytoplasm. It is found in the nucleus. Transcription factor required in complex with TAF3 for the differentiation of myoblasts into myocytes. The complex replaces TFIID at specific promoters at an early stage in the differentiation process. The protein is TATA box-binding protein-like 2 of Mus musculus (Mouse).